The following is a 318-amino-acid chain: Olfactory receptor-like protein COR1 (318 aa).

Residues 1–26 (MASGNCTTPTTFILSGLTDNPGLQMP) lie on the Extracellular side of the membrane. Asn5 carries an N-linked (GlcNAc...) asparagine glycan. Residues 27-49 (LFMVFLAIYTITLLTNLGLIALI) traverse the membrane as a helical segment. Residues 50-57 (SVDLHLQT) are Cytoplasmic-facing. Residues 58–79 (PMYIFLQNLSFTDAAYSTVITP) form a helical membrane-spanning segment. Residues 80 to 100 (KMLATFLEERKTISYVGCILQ) are Extracellular-facing. A disulfide bridge links Cys97 with Cys179. The helical transmembrane segment at 101-120 (YFSFVLLTVTESLLLAVMAY) threads the bilayer. Residues 121–139 (DRYVAICKPLLYPSIMTKA) are Cytoplasmic-facing. Residues 140 to 164 (VCWRLVESLYFLAFLNSLVHTSGLL) form a helical membrane-spanning segment. Topologically, residues 165 to 205 (KLSFCYSNVVNHFFCDISPLFQISSSSIAISELLVIISGSL) are extracellular. A helical membrane pass occupies residues 206 to 226 (FVMSSIIIILISYVFIILTVV). Residues 227 to 239 (MIRSKDGKYKAFS) lie on the Cytoplasmic side of the membrane. Residues 240–260 (TCTSHLMAVSLFHGTVIFMYL) form a helical membrane-spanning segment. Over 261-271 (RPVKLFSLDTD) the chain is Extracellular. Residues 272 to 292 (KIASLFYTVVIPMLNPLIYSW) traverse the membrane as a helical segment. Topologically, residues 293–318 (RNKEVKDALRRLTATTFGFIDSKAVQ) are cytoplasmic.

This sequence belongs to the G-protein coupled receptor 1 family.

Its subcellular location is the cell membrane. Its function is as follows. Odorant receptor. This Gallus gallus (Chicken) protein is Olfactory receptor-like protein COR1 (COR1).